The following is a 447-amino-acid chain: Glucose-6-phosphate isomerase (447 aa).

The Proton donor role is filled by Glu-288. Residues His-309 and Lys-423 contribute to the active site.

It belongs to the GPI family.

The protein localises to the cytoplasm. It carries out the reaction alpha-D-glucose 6-phosphate = beta-D-fructose 6-phosphate. The protein operates within carbohydrate biosynthesis; gluconeogenesis. It participates in carbohydrate degradation; glycolysis; D-glyceraldehyde 3-phosphate and glycerone phosphate from D-glucose: step 2/4. Catalyzes the reversible isomerization of glucose-6-phosphate to fructose-6-phosphate. This Lactobacillus gasseri (strain ATCC 33323 / DSM 20243 / BCRC 14619 / CIP 102991 / JCM 1131 / KCTC 3163 / NCIMB 11718 / NCTC 13722 / AM63) protein is Glucose-6-phosphate isomerase.